Here is a 206-residue protein sequence, read N- to C-terminus: Large ribosomal subunit protein uL4 (206 aa).

Residues 49-76 form a disordered region; sequence QSAKTRTEVRGGGIKPWRQKGTGRARQG.

Belongs to the universal ribosomal protein uL4 family. In terms of assembly, part of the 50S ribosomal subunit.

Functionally, one of the primary rRNA binding proteins, this protein initially binds near the 5'-end of the 23S rRNA. It is important during the early stages of 50S assembly. It makes multiple contacts with different domains of the 23S rRNA in the assembled 50S subunit and ribosome. Forms part of the polypeptide exit tunnel. This is Large ribosomal subunit protein uL4 from Clostridium botulinum (strain Alaska E43 / Type E3).